The chain runs to 495 residues: Keratin, type II cytoskeletal 74 (495 aa).

The segment at 1-105 is head; that stretch reads MASCHTAGHR…DPEIQKVRAQ (105 aa). The coil 1A stretch occupies residues 106–141; the sequence is EREQIKALNDKFASFIDKVRFLEQQNQVLQTKWELL. The 314-residue stretch at 106–419 folds into the IF rod domain; sequence EREQIKALND…KLLEGEENRM (314 aa). A linker 1 region spans residues 142–160; sequence QQLDLSNCRRNLEPVYEAH. Positions 161-252 are coil 1B; it reads ISNLRKQLEM…CLYDEEISQL (92 aa). Residues 253–276 are linker 12; the sequence is QTHASETSVILSMDNNRDLDLAGI. The interval 277-415 is coil 2; sequence IAEVRAHYED…ATYRKLLEGE (139 aa). The tail stretch occupies residues 416–495; sequence ENRMSGENPS…AAGTLARKTT (80 aa). Residues 449 to 495 are disordered; sequence DSEAGNAVGSPSTPRNSQSKTRGSSVDPRDAQDESAAAAGTLARKTT. Positions 457–472 are enriched in polar residues; that stretch reads GSPSTPRNSQSKTRGS.

Belongs to the intermediate filament family. In terms of assembly, heterotetramer of two type I and two type II keratins. Expressed in epidermis with a particularly strong staining in the nail matrix, nail bed and hyponychium (at protein level).

Functionally, has a role in hair formation. Specific component of keratin intermediate filaments in the inner root sheath (IRS) of the hair follicle. The chain is Keratin, type II cytoskeletal 74 from Mus musculus (Mouse).